The following is a 392-amino-acid chain: DNA-directed RNA polymerase subunit Rpo1C (392 aa).

Belongs to the RNA polymerase beta' chain family. As to quaternary structure, part of the RNA polymerase complex.

Its subcellular location is the cytoplasm. It carries out the reaction RNA(n) + a ribonucleoside 5'-triphosphate = RNA(n+1) + diphosphate. In terms of biological role, DNA-dependent RNA polymerase (RNAP) catalyzes the transcription of DNA into RNA using the four ribonucleoside triphosphates as substrates. Forms part of the jaw domain. The polypeptide is DNA-directed RNA polymerase subunit Rpo1C (Saccharolobus islandicus (strain Y.N.15.51 / Yellowstone #2) (Sulfolobus islandicus)).